A 193-amino-acid polypeptide reads, in one-letter code: Ras-like protein 2 (193 aa).

Residue G12–S19 participates in GTP binding. The Effector region signature appears at Y34–Y42. GTP-binding positions include D59–Q63 and N118–D121. The residue at position 190 (C190) is a Cysteine methyl ester. A lipid anchor (S-geranylgeranyl cysteine) is attached at C190. Residues K191–L193 constitute a propeptide, removed in mature form.

Belongs to the small GTPase superfamily. Ras family.

Its subcellular location is the cell membrane. It catalyses the reaction GTP + H2O = GDP + phosphate + H(+). Ras proteins bind GDP/GTP and possess intrinsic GTPase activity. This Physarum polycephalum (Slime mold) protein is Ras-like protein 2 (RAS-2).